A 359-amino-acid chain; its full sequence is Peptide chain release factor 1 (359 aa).

Glutamine 238 is modified (N5-methylglutamine).

This sequence belongs to the prokaryotic/mitochondrial release factor family. Post-translationally, methylated by PrmC. Methylation increases the termination efficiency of RF1.

Its subcellular location is the cytoplasm. Peptide chain release factor 1 directs the termination of translation in response to the peptide chain termination codons UAG and UAA. This is Peptide chain release factor 1 from Mycoplasmopsis pulmonis (strain UAB CTIP) (Mycoplasma pulmonis).